A 406-amino-acid polypeptide reads, in one-letter code: Cysteine desulfurase (406 aa).

Lys226 is modified (N6-(pyridoxal phosphate)lysine). The active-site Cysteine persulfide intermediate is Cys364.

It belongs to the class-V pyridoxal-phosphate-dependent aminotransferase family. Csd subfamily. In terms of assembly, homodimer. Interacts with SufE and the SufBCD complex composed of SufB, SufC and SufD. The interaction with SufE is required to mediate the direct transfer of the sulfur atom from the S-sulfanylcysteine. Pyridoxal 5'-phosphate serves as cofactor.

Its subcellular location is the cytoplasm. It catalyses the reaction (sulfur carrier)-H + L-cysteine = (sulfur carrier)-SH + L-alanine. It carries out the reaction L-selenocysteine + AH2 = hydrogenselenide + L-alanine + A + H(+). It participates in cofactor biosynthesis; iron-sulfur cluster biosynthesis. Functionally, cysteine desulfurases mobilize the sulfur from L-cysteine to yield L-alanine, an essential step in sulfur metabolism for biosynthesis of a variety of sulfur-containing biomolecules. Component of the suf operon, which is activated and required under specific conditions such as oxidative stress and iron limitation. Acts as a potent selenocysteine lyase in vitro, that mobilizes selenium from L-selenocysteine. Selenocysteine lyase activity is however unsure in vivo. This is Cysteine desulfurase from Escherichia coli O139:H28 (strain E24377A / ETEC).